The primary structure comprises 190 residues: dCTP deaminase, dUMP-forming (190 aa).

DCTP-binding positions include 101-106 (KSSLGR), Asp-119, 127-129 (TLE), Gln-148, Tyr-162, and Gln-174. Glu-129 (proton donor/acceptor) is an active-site residue. The disordered stretch occupies residues 162-190 (YGSASAGSKYQGQRGPTPSRSYENFIKNT). The span at 166–190 (SAGSKYQGQRGPTPSRSYENFIKNT) shows a compositional bias: polar residues.

It belongs to the dCTP deaminase family. Homotrimer.

The catalysed reaction is dCTP + 2 H2O = dUMP + NH4(+) + diphosphate. Its pathway is pyrimidine metabolism; dUMP biosynthesis; dUMP from dCTP: step 1/1. In terms of biological role, bifunctional enzyme that catalyzes both the deamination of dCTP to dUTP and the hydrolysis of dUTP to dUMP without releasing the toxic dUTP intermediate. This chain is dCTP deaminase, dUMP-forming, found in Mycobacterium leprae (strain Br4923).